We begin with the raw amino-acid sequence, 203 residues long: MSAFITFEGPEGSGKTTVLQRVSEKLAQDYQLIATREPGGVPTGEEIRKVVLEGANMDIRTEAMLFAASRREHLVEKVVPALNDNKIVLCDRYIDSSLAYQGYARGIGIEEVKQLNDFAINGLYPDLTIYLDITAEVGRDRILKNQRDQNRLDKEDIAFHEKVIEGYRQIIQETPQRFAVVDATRNIDDVVNETYEIILNFLK.

9 to 16 (GPEGSGKT) lines the ATP pocket.

Belongs to the thymidylate kinase family.

It catalyses the reaction dTMP + ATP = dTDP + ADP. In terms of biological role, phosphorylation of dTMP to form dTDP in both de novo and salvage pathways of dTTP synthesis. The chain is Thymidylate kinase from Staphylococcus haemolyticus (strain JCSC1435).